Reading from the N-terminus, the 485-residue chain is MARLTESEARRQQQQLLQPRPSPVGSSGPEPPGGQPDGMKDLDAIKLFVGQIPRHLDEKDLKPLFEQFGRIYELTVLKDPYTGMHKGCAFLTYCARDSAIKAQTALHEQKTLPGMARPIQVKPADSESRGGRDRKLFVGMLNKQQSEEDVLRLFQPFGVIDECTVLRGPDGSSKGCAFVKFSSHTEAQAAIHALHGSQTMPGASSSLVVKFADTDKERTLRRMQQMVGQLGILTPSLTLPFSPYSAYAQALMQQQTTVLSTSGSYLSPGVAFSPCHIQQIGAVSLNGLPATPIAPASGLHSPPLLGTTAVPGLVAPITNGFAGVVPFPGGHPALETVYANGLVPYPAQSPTVAETLHPAFSGVQQYTAMYPTAAITPIAHSVPQPPPLLQQQQREGPEGCNLFIYHLPQEFGDTELTQMFLPFGNIISSKVFMDRATNQSKCFGFVSFDNPASAQAAIQAMNGFQIGMKRLKVQLKRPKDPGHPY.

A compositionally biased stretch (basic and acidic residues) spans 1 to 11 (MARLTESEARR). The tract at residues 1–40 (MARLTESEARRQQQQLLQPRPSPVGSSGPEPPGGQPDGMK) is disordered. The span at 12–28 (QQQQLLQPRPSPVGSSG) shows a compositional bias: low complexity. 3 consecutive RRM domains span residues 45-126 (IKLF…PADS), 134-214 (RKLF…FADT), and 400-478 (CNLF…LKRP).

This sequence belongs to the CELF/BRUNOL family. Expressed in brain.

It is found in the nucleus. It localises to the cytoplasm. Functionally, RNA-binding protein implicated in the regulation of pre-mRNA alternative splicing. Mediates exon inclusion and/or exclusion in pre-mRNA that are subject to tissue-specific and developmentally regulated alternative splicing. Specifically activates exon 5 inclusion of cardiac isoforms of TNNT2 during heart remodeling at the juvenile to adult transition. Binds to muscle-specific splicing enhancer (MSE) intronic sites flanking the alternative exon 5 of TNNT2 pre-mRNA. This is CUGBP Elav-like family member 5 (CELF5) from Homo sapiens (Human).